The primary structure comprises 74 residues: uncharacterized protein (74 aa).

This is an uncharacterized protein from Methanocaldococcus jannaschii (strain ATCC 43067 / DSM 2661 / JAL-1 / JCM 10045 / NBRC 100440) (Methanococcus jannaschii).